A 138-amino-acid chain; its full sequence is Ribulose bisphosphate carboxylase small subunit (138 aa).

The protein belongs to the RuBisCO small chain family. In terms of assembly, heterohexadecamer of 8 large and 8 small subunits.

The protein resides in the plastid. It localises to the chloroplast. In terms of biological role, ruBisCO catalyzes two reactions: the carboxylation of D-ribulose 1,5-bisphosphate, the primary event in carbon dioxide fixation, as well as the oxidative fragmentation of the pentose substrate in the photorespiration process. Both reactions occur simultaneously and in competition at the same active site. Although the small subunit is not catalytic it is essential for maximal activity. The protein is Ribulose bisphosphate carboxylase small subunit of Cyanidium caldarium (Red alga).